We begin with the raw amino-acid sequence, 447 residues long: Chromosomal replication initiator protein DnaA (447 aa).

Residues 1–74 are domain I, interacts with DnaA modulators; it reads MPDVESFWHS…TGFKLTGAEV (74 aa). Positions 74–109 are domain II; that stretch reads VMPHFVVADEKDAALAQELEEPAEEEVVFSEQSKKA. The tract at residues 110–326 is domain III, AAA+ region; sequence MLNPKYTFDT…GALVRVQAFA (217 aa). ATP contacts are provided by Gly154, Gly156, Lys157, and Thr158. Residues 327-447 form a domain IV, binds dsDNA region; sequence TINGEDITTS…VSEIKNLLNS (121 aa).

Belongs to the DnaA family. In terms of assembly, oligomerizes as a right-handed, spiral filament on DNA at oriC.

It is found in the cytoplasm. Plays an essential role in the initiation and regulation of chromosomal replication. ATP-DnaA binds to the origin of replication (oriC) to initiate formation of the DNA replication initiation complex once per cell cycle. Binds the DnaA box (a 9 base pair repeat at the origin) and separates the double-stranded (ds)DNA. Forms a right-handed helical filament on oriC DNA; dsDNA binds to the exterior of the filament while single-stranded (ss)DNA is stabiized in the filament's interior. The ATP-DnaA-oriC complex binds and stabilizes one strand of the AT-rich DNA unwinding element (DUE), permitting loading of DNA polymerase. After initiation quickly degrades to an ADP-DnaA complex that is not apt for DNA replication. Binds acidic phospholipids. Functionally, strand separation requires the DnaA boxes and adjacent DnaA-trio motifs as well as ATP. The polypeptide is Chromosomal replication initiator protein DnaA (Enterococcus faecalis (strain ATCC 700802 / V583)).